A 361-amino-acid chain; its full sequence is Caffeic acid 3-O-methyltransferase 1 (361 aa).

128-134 (MNQDKVL) contacts substrate. Residues 160–178 (AFEYHGTDPRFNKVFNQGM) are substrate binding. 5 residues coordinate S-adenosyl-L-methionine: Gly-206, Asp-229, Asp-249, Met-250, and Lys-263. His-267 functions as the Proton acceptor in the catalytic mechanism.

It belongs to the class I-like SAM-binding methyltransferase superfamily. Cation-independent O-methyltransferase family. COMT subfamily. Homodimer.

It carries out the reaction (E)-caffeate + S-adenosyl-L-methionine = (E)-ferulate + S-adenosyl-L-homocysteine + H(+). Its pathway is aromatic compound metabolism; phenylpropanoid biosynthesis. Its function is as follows. Catalyzes the conversion of caffeic acid to ferulic acid and of 5-hydroxyferulic acid to sinapic acid. The resulting products may subsequently be converted to the corresponding alcohols that are incorporated into lignins. The chain is Caffeic acid 3-O-methyltransferase 1 (COMT1) from Ocimum basilicum (Sweet basil).